The primary structure comprises 293 residues: Elongation factor Ts (293 aa).

The interval 80–83 is involved in Mg(2+) ion dislocation from EF-Tu; sequence TDFV.

It belongs to the EF-Ts family.

It is found in the cytoplasm. Functionally, associates with the EF-Tu.GDP complex and induces the exchange of GDP to GTP. It remains bound to the aminoacyl-tRNA.EF-Tu.GTP complex up to the GTP hydrolysis stage on the ribosome. The protein is Elongation factor Ts of Aeromonas hydrophila subsp. hydrophila (strain ATCC 7966 / DSM 30187 / BCRC 13018 / CCUG 14551 / JCM 1027 / KCTC 2358 / NCIMB 9240 / NCTC 8049).